Reading from the N-terminus, the 274-residue chain is Rhamnulose-1-phosphate aldolase (274 aa).

The active site involves glutamate 117. Residues histidine 141, histidine 143, and histidine 212 each coordinate Zn(2+).

This sequence belongs to the aldolase class II family. RhaD subfamily. In terms of assembly, homotetramer. It depends on Zn(2+) as a cofactor.

Its subcellular location is the cytoplasm. It carries out the reaction L-rhamnulose 1-phosphate = (S)-lactaldehyde + dihydroxyacetone phosphate. It functions in the pathway carbohydrate degradation; L-rhamnose degradation; glycerone phosphate from L-rhamnose: step 3/3. Its function is as follows. Catalyzes the reversible cleavage of L-rhamnulose-1-phosphate to dihydroxyacetone phosphate (DHAP) and L-lactaldehyde. The sequence is that of Rhamnulose-1-phosphate aldolase from Pectobacterium carotovorum subsp. carotovorum (strain PC1).